The primary structure comprises 987 residues: KAT8 regulatory NSL complex subunit 1-like protein (987 aa).

A Glycyl lysine isopeptide (Lys-Gly) (interchain with G-Cter in SUMO2) cross-link involves residue K134. Position 462 is a phosphoserine (S462). Positions 708-738 are disordered; sequence RKKRHLSETALGERTKLEESDFQHTESGSHS. A compositionally biased stretch (basic and acidic residues) spans 718–731; that stretch reads LGERTKLEESDFQH. The region spanning 794-915 is the PEHE domain; it reads EILTPSWRMV…QSQETKSLWW (122 aa). The residue at position 859 (K859) is an N6-acetyllysine. A disordered region spans residues 949-972; it reads GEIFGTSVPENGHHPKKQSDGMEE. Basic and acidic residues predominate over residues 959–972; that stretch reads NGHHPKKQSDGMEE.

Acetylated on lysine residues by KAT8 upon ionizing radiation-induced DNA damage; deacetylated by HDAC3.

This is KAT8 regulatory NSL complex subunit 1-like protein (KANSL1L) from Homo sapiens (Human).